Consider the following 1129-residue polypeptide: Ubiquitin carboxyl-terminal hydrolase 7 (1129 aa).

The disordered stretch occupies residues 1-20 (MEIETDQSIEAMDTQDTQEV). The MATH domain occupies 101–222 (ETTFSFTVEN…NNSITLEVHV (122 aa)). The region spanning 241-548 (VGLKNQGATC…NAYMLVYIRQ (308 aa)) is the USP domain. The active-site Nucleophile is Cys-250. His-490 serves as the catalytic Proton acceptor. Ser-1117 carries the phosphoserine modification.

The protein belongs to the peptidase C19 family.

The protein resides in the nucleus. It catalyses the reaction Thiol-dependent hydrolysis of ester, thioester, amide, peptide and isopeptide bonds formed by the C-terminal Gly of ubiquitin (a 76-residue protein attached to proteins as an intracellular targeting signal).. Hydrolase that deubiquitinates target proteins. This Drosophila melanogaster (Fruit fly) protein is Ubiquitin carboxyl-terminal hydrolase 7 (Usp7).